The following is a 468-amino-acid chain: Plant UBX domain-containing protein 7 (468 aa).

Methionine 1 is subject to N-acetylmethionine. The UBA-like domain occupies 7 to 48; that stretch reads SGDQQRLVSSFLEIAVGQTAETARQFLQATSWKLEEAIQLFY. 2 disordered regions span residues 138–168 and 299–329; these read KSPGIWEPDEGDSSASASASASASESASAPR and HFASLSKKRPRGSFSLTPHSKPKEDVAKDEE. Positions 150–166 are enriched in low complexity; that stretch reads SSASASASASASESASA. The UIM domain occupies 328–347; the sequence is EEEEELQRALAASLEDNNMK. Residues 385–466 form the UBX domain; that stretch reads DRSLQCRVGI…GVANSMISAT (82 aa).

Interacts with CDC48A via its UBX domain and with ubiquitin via its N-terminal UBA-like domain. Expressed broadly in sporophyte and gametophyte cells.

The protein resides in the nucleus. Acts as a bridge between CDC48A and ubiquitin, suggesting a role in targeted protein degradation. This chain is Plant UBX domain-containing protein 7, found in Arabidopsis thaliana (Mouse-ear cress).